The sequence spans 314 residues: Ribose-phosphate pyrophosphokinase (314 aa).

ATP contacts are provided by residues aspartate 37–glutamate 39 and arginine 96–glutamine 97. Mg(2+)-binding residues include histidine 131 and aspartate 170. Lysine 194 is an active-site residue. D-ribose 5-phosphate contacts are provided by residues arginine 196, aspartate 220, and aspartate 224–threonine 228.

The protein belongs to the ribose-phosphate pyrophosphokinase family. Class I subfamily. As to quaternary structure, homohexamer. It depends on Mg(2+) as a cofactor.

It localises to the cytoplasm. The enzyme catalyses D-ribose 5-phosphate + ATP = 5-phospho-alpha-D-ribose 1-diphosphate + AMP + H(+). It functions in the pathway metabolic intermediate biosynthesis; 5-phospho-alpha-D-ribose 1-diphosphate biosynthesis; 5-phospho-alpha-D-ribose 1-diphosphate from D-ribose 5-phosphate (route I): step 1/1. Its function is as follows. Involved in the biosynthesis of the central metabolite phospho-alpha-D-ribosyl-1-pyrophosphate (PRPP) via the transfer of pyrophosphoryl group from ATP to 1-hydroxyl of ribose-5-phosphate (Rib-5-P). This chain is Ribose-phosphate pyrophosphokinase, found in Vibrio parahaemolyticus serotype O3:K6 (strain RIMD 2210633).